Here is a 68-residue protein sequence, read N- to C-terminus: DNA-directed RNA polymerase subunit omega (68 aa).

It belongs to the RNA polymerase subunit omega family. In terms of assembly, the RNAP catalytic core consists of 2 alpha, 1 beta, 1 beta' and 1 omega subunit. When a sigma factor is associated with the core the holoenzyme is formed, which can initiate transcription.

The enzyme catalyses RNA(n) + a ribonucleoside 5'-triphosphate = RNA(n+1) + diphosphate. In terms of biological role, promotes RNA polymerase assembly. Latches the N- and C-terminal regions of the beta' subunit thereby facilitating its interaction with the beta and alpha subunits. This is DNA-directed RNA polymerase subunit omega from Persephonella marina (strain DSM 14350 / EX-H1).